The primary structure comprises 477 residues: Bifunctional protein HldE (477 aa).

The interval 1–318 is ribokinase; sequence MKVTLPEFER…ENAVRGRADT (318 aa). Lys179 bears the N6-acetyllysine mark. ATP is bound at residue 195-198; it reads NLSE. The active site involves Asp264. The interval 344–477 is cytidylyltransferase; it reads MTNGVFDILH…IKKIQQDKKG (134 aa).

The protein in the N-terminal section; belongs to the carbohydrate kinase PfkB family. In the C-terminal section; belongs to the cytidylyltransferase family. Homodimer.

The enzyme catalyses D-glycero-beta-D-manno-heptose 7-phosphate + ATP = D-glycero-beta-D-manno-heptose 1,7-bisphosphate + ADP + H(+). It carries out the reaction D-glycero-beta-D-manno-heptose 1-phosphate + ATP + H(+) = ADP-D-glycero-beta-D-manno-heptose + diphosphate. The protein operates within nucleotide-sugar biosynthesis; ADP-L-glycero-beta-D-manno-heptose biosynthesis; ADP-L-glycero-beta-D-manno-heptose from D-glycero-beta-D-manno-heptose 7-phosphate: step 1/4. Its pathway is nucleotide-sugar biosynthesis; ADP-L-glycero-beta-D-manno-heptose biosynthesis; ADP-L-glycero-beta-D-manno-heptose from D-glycero-beta-D-manno-heptose 7-phosphate: step 3/4. In terms of biological role, catalyzes the phosphorylation of D-glycero-D-manno-heptose 7-phosphate at the C-1 position to selectively form D-glycero-beta-D-manno-heptose-1,7-bisphosphate. Functionally, catalyzes the ADP transfer from ATP to D-glycero-beta-D-manno-heptose 1-phosphate, yielding ADP-D-glycero-beta-D-manno-heptose. The protein is Bifunctional protein HldE of Escherichia fergusonii (strain ATCC 35469 / DSM 13698 / CCUG 18766 / IAM 14443 / JCM 21226 / LMG 7866 / NBRC 102419 / NCTC 12128 / CDC 0568-73).